The sequence spans 125 residues: Small ribosomal subunit protein bS16 (125 aa).

Residues 87–125 (EGKKKQALARQSASKKAVKEKTEESKGSEVDSETSTSAD) are disordered. A compositionally biased stretch (basic and acidic residues) spans 103–115 (AVKEKTEESKGSE).

Belongs to the bacterial ribosomal protein bS16 family.

The sequence is that of Small ribosomal subunit protein bS16 from Prochlorococcus marinus (strain MIT 9211).